A 199-amino-acid chain; its full sequence is MSKLLVINGSVIPSDKSNSHEMARIFLEEYKKVNPNDEIIELDLNKLVVGTNVLTTETFSTYWGEEEGMKYINQLKDVDKLLVIAPMYNFHVSGMLKNYIDHVALANQTFSYKYATKGASIGLLDKLKVQILATQGAPKGWYPWGDHVAYLKGTWEFMGAKVAEPILLAGVKVEPLSTQSPKEIVSSITSDLIAAAKKF.

FMN-binding positions include Ser-10, 17-19 (SNS), and 87-90 (MYNF).

It belongs to the azoreductase type 1 family. Homodimer. Requires FMN as cofactor.

The enzyme catalyses 2 a quinone + NADH + H(+) = 2 a 1,4-benzosemiquinone + NAD(+). It catalyses the reaction N,N-dimethyl-1,4-phenylenediamine + anthranilate + 2 NAD(+) = 2-(4-dimethylaminophenyl)diazenylbenzoate + 2 NADH + 2 H(+). Its function is as follows. Quinone reductase that provides resistance to thiol-specific stress caused by electrophilic quinones. In terms of biological role, also exhibits azoreductase activity. Catalyzes the reductive cleavage of the azo bond in aromatic azo compounds to the corresponding amines. This is FMN-dependent NADH:quinone oxidoreductase 1 from Mesoplasma florum (strain ATCC 33453 / NBRC 100688 / NCTC 11704 / L1) (Acholeplasma florum).